The primary structure comprises 212 residues: MIIIFLGPPGAGKGTQGKKIAKKIHLPHIAIGDIFRAIIKTSSKDAEVINSYVEQGKLIPDEIVNHIIKNFLSSSDYKKGYILDGYPRNLEQAKFFESFVTEKIKVIYLNVSDELLIKRILGRYSCKSCGKIYNDYFLKPRIDKICDVCKSSVFEYRKDDNEEVIKERINIFKTETYPLIQHYKNNDDFYMIDGNKNEEQIEDHIEKVLKIN.

10-15 (GAGKGT) serves as a coordination point for ATP. The interval 30 to 59 (AIGDIFRAIIKTSSKDAEVINSYVEQGKLI) is NMP. Residues Arg36, 57-59 (KLI), 85-88 (GYPR), and Gln92 each bind AMP. Positions 122 to 160 (GRYSCKSCGKIYNDYFLKPRIDKICDVCKSSVFEYRKDD) are LID. Position 123 (Arg123) interacts with ATP. Residues Cys126 and Cys129 each contribute to the Zn(2+) site. An ATP-binding site is contributed by 132-133 (IY). Cys146 and Cys149 together coordinate Zn(2+). AMP contacts are provided by Arg157 and Arg168. Lys196 contributes to the ATP binding site.

The protein belongs to the adenylate kinase family. Monomer.

Its subcellular location is the cytoplasm. It catalyses the reaction AMP + ATP = 2 ADP. Its pathway is purine metabolism; AMP biosynthesis via salvage pathway; AMP from ADP: step 1/1. Catalyzes the reversible transfer of the terminal phosphate group between ATP and AMP. Plays an important role in cellular energy homeostasis and in adenine nucleotide metabolism. The polypeptide is Adenylate kinase (Rickettsia bellii (strain RML369-C)).